An 884-amino-acid polypeptide reads, in one-letter code: Nonsense-mediated mRNA decay factor EBS1 (884 aa).

2 disordered regions span residues 596 to 645 (NSMK…PTMG) and 755 to 774 (QGGL…NSAY). Residues 633–645 (RSSSLDSFSPTMG) are compositionally biased toward polar residues. Residues 760–772 (SSQQPSSMSSLNS) are compositionally biased toward low complexity.

This sequence belongs to the EST1 family. Interacts with NMD helicase UPF1. Interacts with CDC33.

It localises to the nucleus. The protein localises to the chromosome. The protein resides in the telomere. It is found in the cytoplasm. Its subcellular location is the P-body. Functionally, plays a role in nonsense-mediated mRNA decay (NMD). Recruits UPF1 to cytoplasmic mRNA decay bodies (P-bodies). Negative regulator of gene expression. Inhibits translation most likely through effects on eIF-4E (CDC33). Involved in telomere maintenance. The chain is Nonsense-mediated mRNA decay factor EBS1 from Saccharomyces cerevisiae (strain ATCC 204508 / S288c) (Baker's yeast).